A 2144-amino-acid chain; its full sequence is Insulin-like receptor (2144 aa).

The first 43 residues, 1–43 (MFNMPRGVTKSKSKRGKIKMENDMAAAATTTACTLGHICVLCR), serve as a signal peptide directing secretion. N74 is a glycosylation site (N-linked (GlcNAc...) asparagine). Residues 174 to 199 (RRQHQQQHHHHYQHHHQQHHQQHHQR) are compositionally biased toward basic residues. The segment at 174 to 200 (RRQHQQQHHHHYQHHHQQHHQQHHQRQ) is disordered. The N-linked (GlcNAc...) asparagine glycan is linked to N203. A disordered region spans residues 229 to 256 (NYKQQQQLQHNQQLPRATPQQKQQEKDR). A compositionally biased stretch (low complexity) spans 232–242 (QQQQLQHNQQL). N-linked (GlcNAc...) asparagine glycans are attached at residues N265, N356, N376, N406, N468, and N509. 8 disulfide bridges follow: C531–C539, C535–C545, C546–C554, C550–C564, C567–C576, C580–C591, C597–C618, and C635–C638. An FU repeat occupies 542 to 586 (EHTCCSQDCLGGCVIDKNGNESCISCRNVSFNNICMDSCPKGYYQ). N-linked (GlcNAc...) asparagine glycosylation is found at N561 and N569. 11 N-linked (GlcNAc...) asparagine glycosylation sites follow: N751, N810, N824, N839, N864, N898, N946, N1053, N1147, N1218, and N1265. 2 consecutive Fibronectin type-III domains span residues 825 to 927 (VTTK…TNPG) and 928 to 1026 (RPSK…EYDD). Positions 1053-1084 (NGSSDKSDGAEGAALDSNAIPNGGATNPSRRR) are disordered. One can recognise a Fibronectin type-III 3 domain in the interval 1210–1305 (LKVDLEHANN…EVEHIKVEPP (96 aa)). Residues 1311 to 1331 (VFFWLLGIGLAFLIVSLFGYV) traverse the membrane as a helical segment. At 1332–2144 (CYLHKRKVPS…PPNGFIGREA (813 aa)) the chain is on the cytoplasmic side. The chico-binding stretch occupies residues 1351 to 1354 (NPFY). A Phosphotyrosine; by autocatalysis modification is found at Y1354. The Protein kinase domain occupies 1371-1659 (IIQLAPLGQG…LEPQCPNSQF (289 aa)). ATP is bound by residues 1377 to 1385 (LGQGSFGMV) and K1405. D1519 serves as the catalytic Proton acceptor. 3 positions are modified to phosphotyrosine; by autocatalysis: Y1545, Y1549, and Y1550. Disordered stretches follow at residues 1690 to 1724 (VPLD…DQPP), 1788 to 1871 (RGYE…KKTV), 1886 to 1962 (LFNH…ISDN), and 2020 to 2144 (ISHN…GREA). The residue at position 1816 (S1816) is a Phosphoserine. 2 stretches are compositionally biased toward low complexity: residues 1849–1860 (STASAGSSNASS) and 1894–1916 (SNAS…NLTS). Positions 2042–2062 (SDEDNEQEEDDEDEDDDVDDE) are enriched in acidic residues. Basic and acidic residues predominate over residues 2063 to 2073 (HVEHIKMERMP). The segment covering 2084–2120 (SKTQPPRSRSVSQTRKSPTNPNSGIGATGAGNRSNLL) has biased composition (polar residues).

It belongs to the protein kinase superfamily. Tyr protein kinase family. Insulin receptor subfamily. In terms of assembly, tetramer of 2 alpha and 2 beta chains linked by disulfide bonds. The alpha chains contribute to the formation of the ligand-binding domain, while the beta chains carry the kinase domain. Interacts (via C-terminal cytoplasmic region) with dock/dreadlocks (via SH2 and SH3 domains); when autophosphorylated. May interact (via beta subunit) with chico/IRS-1; this interaction may lead to tyrosine phosphorylation of the insulin receptor substrate chico. Interacts with Elp6; the interaction may stabilize Elp6. Mn(2+) serves as cofactor. Post-translationally, the 280 kDa proreceptor is proteolytically processed to form a 120 kDa alpha subunit and a 170 kDa beta subunit. The beta subunit undergoes cell-specific cleavage to generate a 90 kDa beta subunit and a free 60 kDa C-terminal subunit. Both the 90 kDa and the 170 kDa beta subunits can assemble with the alpha subunits to form mature receptors. Autophosphorylated on tyrosine residues, including Tyr-1549 and Tyr-1550, in response to exogenous insulin. Tyr-1549 and Tyr-1550 are dephosphorylated by Ptp61F recruited by the dock/dreadlocks adapter protein. In terms of processing, phosphorylation of Tyr-1354 is required for Chico-binding.

It localises to the membrane. It is found in the cell projection. Its subcellular location is the axon. The protein localises to the growth cone membrane. The catalysed reaction is L-tyrosyl-[protein] + ATP = O-phospho-L-tyrosyl-[protein] + ADP + H(+). With respect to regulation, activated in response to insulin. Autophosphorylation activates the kinase activity. In terms of biological role, has a ligand-stimulated tyrosine-protein kinase activity. Binds 3 insulin-like peptide ligands. Regulates cell number and cell size during development by regulating cell growth and survival, affecting body size and organ size, including ovaries and imaginal disks. Plays a role in life-span determination. May be involved in regulation of other neuroendocrine signaling pathways. Involved in the development of the embryonic nervous system. Functions upstream of dock/dreadlocks for photoreceptor (R cell) axon guidance and targeting in the visual system. Involved in the acs mediated recovery of gut enterocytes following the cytoplasmic purge response to intestinal bacterial infection. The protein is Insulin-like receptor of Drosophila melanogaster (Fruit fly).